Consider the following 255-residue polypeptide: Acetylglutamate kinase (255 aa).

Substrate contacts are provided by residues 40-41 (GG), Arg-62, and Asn-153.

Belongs to the acetylglutamate kinase family. ArgB subfamily.

Its subcellular location is the cytoplasm. It carries out the reaction N-acetyl-L-glutamate + ATP = N-acetyl-L-glutamyl 5-phosphate + ADP. It participates in amino-acid biosynthesis; L-arginine biosynthesis; N(2)-acetyl-L-ornithine from L-glutamate: step 2/4. Its function is as follows. Catalyzes the ATP-dependent phosphorylation of N-acetyl-L-glutamate. In Bacillus anthracis (strain CDC 684 / NRRL 3495), this protein is Acetylglutamate kinase.